We begin with the raw amino-acid sequence, 248 residues long: 14-3-3-like protein G-BOX factor 14 kappa (248 aa).

3 positions are modified to phosphoserine: Ser-70, Ser-112, and Ser-193. Thr-214 carries the post-translational modification Phosphothreonine.

It belongs to the 14-3-3 family. As to quaternary structure, interacts with the isocitrate dehydrogenase IDH3, and malate dehydrogenases MDH1 and MDH2. Interacts with CINV1.

It is found in the nucleus. Its subcellular location is the cytoplasm. In terms of biological role, is associated with a DNA binding complex that binds to the G box, a well-characterized cis-acting DNA regulatory element found in plant genes. Involved in the regulation of nutrient metabolism. Negative regulator of freezing tolerance that modulates cold-responsive C-repeat-binding factors (CBF) DREB1A AND DREB1B proteins stability by facilitating their ubiquitin-mediated degradation; this processus is counteracted by B1L. In Arabidopsis thaliana (Mouse-ear cress), this protein is 14-3-3-like protein G-BOX factor 14 kappa.